The primary structure comprises 64 residues: Large ribosomal subunit protein bL28 (64 aa).

It belongs to the bacterial ribosomal protein bL28 family.

The chain is Large ribosomal subunit protein bL28 from Persephonella marina (strain DSM 14350 / EX-H1).